Here is a 359-residue protein sequence, read N- to C-terminus: Histidinol-phosphate aminotransferase (359 aa).

Lys-217 is subject to N6-(pyridoxal phosphate)lysine.

This sequence belongs to the class-II pyridoxal-phosphate-dependent aminotransferase family. Histidinol-phosphate aminotransferase subfamily. Homodimer. Pyridoxal 5'-phosphate serves as cofactor.

It catalyses the reaction L-histidinol phosphate + 2-oxoglutarate = 3-(imidazol-4-yl)-2-oxopropyl phosphate + L-glutamate. It participates in amino-acid biosynthesis; L-histidine biosynthesis; L-histidine from 5-phospho-alpha-D-ribose 1-diphosphate: step 7/9. This is Histidinol-phosphate aminotransferase from Salmonella newport (strain SL254).